The sequence spans 400 residues: Casein kinase I homolog hhp2 (400 aa).

The region spanning 12–278 is the Protein kinase domain; sequence YRIGRKIGSG…YLRKLFRDLL (267 aa). ATP is bound by residues 18 to 26 and Lys41; that span reads IGSGSFGQI. The active-site Proton acceptor is the Asp131. Residues 330–352 form a disordered region; it reads PNYSSIPLPAERNPKTPQSFSTN.

Belongs to the protein kinase superfamily. CK1 Ser/Thr protein kinase family. Casein kinase I subfamily.

The protein localises to the nucleus. It carries out the reaction L-seryl-[protein] + ATP = O-phospho-L-seryl-[protein] + ADP + H(+). The catalysed reaction is L-threonyl-[protein] + ATP = O-phospho-L-threonyl-[protein] + ADP + H(+). Its function is as follows. Involved in DNA repair. May regulate the activity of protein(s) involved in double strand break repair caused by gamma rays. This chain is Casein kinase I homolog hhp2 (hhp2), found in Schizosaccharomyces pombe (strain 972 / ATCC 24843) (Fission yeast).